A 399-amino-acid chain; its full sequence is Long-chain primary alcohol dehydrogenase AdhA (399 aa).

Belongs to the iron-containing alcohol dehydrogenase family. As to quaternary structure, homotetramer. Zn(2+) serves as cofactor.

The enzyme catalyses a primary alcohol + NADP(+) = an aldehyde + NADPH + H(+). Functionally, alcohol dehydrogenase active against primary long-chain alcohols. Pentan-1-ol is the optimum substrate in vitro, but also shows efficient dehydrogenase activity on propanol, hexanol, and ethanol. This chain is Long-chain primary alcohol dehydrogenase AdhA (adhA), found in Thermoanaerobacter ethanolicus (Clostridium thermohydrosulfuricum).